The chain runs to 407 residues: Na(+)-translocating NADH-quinone reductase subunit F (407 aa).

The helical transmembrane segment at 3-23 (ITLGIAMFTVIVLALAVIILF) threads the bilayer. The 95-residue stretch at 32–126 (GDITIEINDD…SMKVELPEEV (95 aa)) folds into the 2Fe-2S ferredoxin-type domain. [2Fe-2S] cluster contacts are provided by C69, C75, C78, and C110. The 141-residue stretch at 129–269 (VKKWECTVIS…SGPFGEFFAK (141 aa)) folds into the FAD-binding FR-type domain. The segment at 272 to 389 (DAEMVFVGGG…PIMNASVIKM (118 aa)) is catalytic.

Belongs to the NqrF family. In terms of assembly, composed of six subunits; NqrA, NqrB, NqrC, NqrD, NqrE and NqrF. [2Fe-2S] cluster serves as cofactor. It depends on FAD as a cofactor.

It is found in the cell inner membrane. The catalysed reaction is a ubiquinone + n Na(+)(in) + NADH + H(+) = a ubiquinol + n Na(+)(out) + NAD(+). Functionally, NQR complex catalyzes the reduction of ubiquinone-1 to ubiquinol by two successive reactions, coupled with the transport of Na(+) ions from the cytoplasm to the periplasm. The first step is catalyzed by NqrF, which accepts electrons from NADH and reduces ubiquinone-1 to ubisemiquinone by a one-electron transfer pathway. The sequence is that of Na(+)-translocating NADH-quinone reductase subunit F from Pasteurella multocida (strain Pm70).